A 660-amino-acid polypeptide reads, in one-letter code: MRPRPILLLLLMFLPMLPAPPPGQPSGRRRGRRSGGSGGGFWGDRVDSQPFAIPYIHPTNPFAPDVTAAAGAGPRVRQPARPLGSAWRDQAQRPAVASRRRPTTAGAAPLTAVAPAHDTPPVPDVDSRGAILRRQYNLSTSPLTSSVATGTNLVLYAAPLSPLLPLQDGTNTHIMATEASNYAQYRVARATIRYRPLVPNAVGGYAISISFWPQTTTTPTSVDMNSITSTDVRILVQPGIASELVIPSERLHYRNQGWRSVETSGVAEEEATSGLVMLCIHGSLVNSYTNTPYTGALGLLDFALELEFRNLTPGNTNTRVSRYSSTARHRLRRGADGTAELTTTAATRFMKDLYFTSTNGVGEIGRGIALTLFNLADTLLGGLPTELISSAGGQLFYSRPVVSANGEPTVKLYTSVENAQQDKGIAIPHDIDLGESRVVIQDYDNQHEQDRPTPSPAPSRPFSVLRANDVLWLSLTAAEYDQSTYGSSTGPVYVSDSVTLVNVATGAQAVARSLDWTKVTLDGRPLSTIQQYSKTFFVLPLRGKLSFWEAGTTKAGYPYNYNTTASDQLLVENAAGHRVAISTYTTSLGAGPVSISAVAVLAPHSALALLEDTLDYPARAHTFDDFCPECRPLGLQGCAFQSTVAELQRLKMKVGKTREL.

An N-terminal signal peptide occupies residues 1-19 (MRPRPILLLLLMFLPMLPA). Disordered regions lie at residues 18-43 (PAPP…GFWG) and 66-127 (VTAA…DVDS). The short motif at 28–33 (RRRGRR) is the Nuclear localization signal element. The span at 103 to 116 (TTAGAAPLTAVAPA) shows a compositional bias: low complexity. Residues Asn-137 and Asn-310 are each glycosylated (N-linked (GlcNAc...) asparagine; by host). Residues 368–394 (IALTLFNLADTLLGGLPTELISSAGGQ) are particle formation. Residue Asn-562 is glycosylated (N-linked (GlcNAc...) asparagine; by host). Residues 585–610 (TTSLGAGPVSISAVAVLAPHSALALL) form an oligomerization region.

The protein belongs to the hepevirus capsid protein family. In terms of assembly, homodimer. As to quaternary structure, self-assembles to form the capsid. The capsid is dominated by dimers that define the 30 morphological units. Interacts with phosphorylated protein ORF3. Interacts with host TMEM134. Interacts with host ASGR1 and ASGR2; these interactions facilitate infection of host hepatocytes. Post-translationally, cleaved by host protease in the N-terminus. N-glycosylated. In terms of processing, not N-glycosylated. The C-terminus of the capsid protein ORF2 is truncated in non-enveloped virions shedded in feces, probably due to host proteases.

It is found in the secreted. The protein resides in the virion. The protein localises to the host cytoplasm. Its subcellular location is the host endoplasmic reticulum. It localises to the host Golgi apparatus. It is found in the host cell surface. The protein resides in the host nucleus. In terms of biological role, plays a role in the inhibition of host antibody-mediated neutralization without blocking viral cell entry. Functionally, forms an icosahedral capsid with a T=1 symmetry and a 34 nm diameter. The capsid is composed of 60 copies linked to each other. Binds to the 5' end of the genomic RNA to mediate genome encapsidation. Binds to heparin surface proteoglycans (HSPGs) to mediate viral entry. Additionally, the interactions with host ASGR1 and ASGR2 facilitate viral infection of hepatocytes. Inhibits IFN production by blocking host TBK1-induced IRF3 phosphorylation. The nuclear form probably modulates host gene expression. The polypeptide is Pro-secreted protein ORF2 (Hepatitis E virus genotype 1 (isolate Human/Burma) (HEV-1)).